Consider the following 365-residue polypeptide: Aminomethyltransferase (365 aa).

The protein belongs to the GcvT family. As to quaternary structure, the glycine cleavage system is composed of four proteins: P, T, L and H.

It catalyses the reaction N(6)-[(R)-S(8)-aminomethyldihydrolipoyl]-L-lysyl-[protein] + (6S)-5,6,7,8-tetrahydrofolate = N(6)-[(R)-dihydrolipoyl]-L-lysyl-[protein] + (6R)-5,10-methylene-5,6,7,8-tetrahydrofolate + NH4(+). The glycine cleavage system catalyzes the degradation of glycine. This is Aminomethyltransferase from Aeromonas salmonicida (strain A449).